We begin with the raw amino-acid sequence, 468 residues long: Adenosylhomocysteinase (468 aa).

Substrate contacts are provided by Thr-63, Asp-139, and Glu-164. Thr-165–Thr-167 serves as a coordination point for NAD(+). Residues Lys-194 and Asp-198 each contribute to the substrate site. NAD(+) contacts are provided by residues Asn-199, Gly-228–Gly-233, Glu-251, Asn-300, Ile-321–His-323, and Asn-374.

This sequence belongs to the adenosylhomocysteinase family. It depends on NAD(+) as a cofactor.

It localises to the cytoplasm. The catalysed reaction is S-adenosyl-L-homocysteine + H2O = L-homocysteine + adenosine. It participates in amino-acid biosynthesis; L-homocysteine biosynthesis; L-homocysteine from S-adenosyl-L-homocysteine: step 1/1. Its function is as follows. May play a key role in the regulation of the intracellular concentration of adenosylhomocysteine. The protein is Adenosylhomocysteinase of Stutzerimonas stutzeri (strain A1501) (Pseudomonas stutzeri).